Consider the following 89-residue polypeptide: Acylphosphatase (89 aa).

Residues 3 to 89 form the Acylphosphatase-like domain; sequence RKEFLVSGRV…DTREKRFSTY (87 aa). Catalysis depends on residues Arg-18 and Asn-36.

The protein belongs to the acylphosphatase family.

It carries out the reaction an acyl phosphate + H2O = a carboxylate + phosphate + H(+). This chain is Acylphosphatase (acyP), found in Clostridium perfringens (strain ATCC 13124 / DSM 756 / JCM 1290 / NCIMB 6125 / NCTC 8237 / Type A).